Consider the following 317-residue polypeptide: Probable methyltransferase tdiE (317 aa).

It belongs to the methyltransferase superfamily. LaeA methyltransferase family.

It functions in the pathway secondary metabolite biosynthesis. In terms of biological role, probable methyltransferase; part of the gene cluster that mediates the biosynthesis of terrequinone A, an antitumor agent. The first step in the biosynthetic pathway for terrequinone A is formation of indole pyruvic acid (IPA) from L-tryptophan by the aminotransferase tdiD. The nonribosomal peptide synthase tdiA then immediately converts unstable IPA to didemethylasterriquinone D (DDAQ D), via condensation of 2 IPA molecules. The symmetric connectivity of the 2 IPA molecules is thought to arise by head-to-tail dual Claisen condensations facilitated by the TE domain. TdiB then catalyzes reverse prenylation by transferring dimethylallyl diphosphate to carbon atom 2' of DDAQ D, to yield asterriquinone C-1. Finally, tdiC and tdiE enzymes robustly convert asterriquinone C-1 to terrequinone A via a transformation involving regular prenylation at carbon atom 5, which requires elimination of the hydroxy group on C-5. The sequence is that of Probable methyltransferase tdiE from Emericella nidulans (strain FGSC A4 / ATCC 38163 / CBS 112.46 / NRRL 194 / M139) (Aspergillus nidulans).